Consider the following 409-residue polypeptide: MGIYSCSAVLSFGLKCPLVIARHRLYHRMFRRNPLLVESHLNRLCSCKCNASLAIGEVVEKEDAEQSRSFNWADVGLNLTEEQDEAITRIPIKMSKRCQALMRQIICFSPEKGSFCDLLGAWLRRMNPIRADWLSILKELKNLDSPFYIKVAEFSLLQDSFEANARDYTKIIHYYGKLNQVEDAERTLLSMKNRGFLIDQVTLTAMVQLYSKAGCHKLAEETFNEIKLLGEPLDYRSYGSMIMAYIRAGVPEKGESLLREMDSQEICAGREVYKALLRDYSMGGDAEGAKRVFDAVQIAGITPDVKLCGLLINAYSVSGQSQNARLAFENMRKAGIKATDKCVALVLAAYEKEEKLNEALGFLVELEKDSIMLGKEASAVLAQWFKKLGVVEEVELLLREFSSSQSQPL.

PPR repeat units lie at residues 164 to 198 (NARD…GFLI), 199 to 233 (DQVT…GEPL), 234 to 268 (DYRS…EICA), 269 to 303 (GREV…GITP), 304 to 338 (DVKL…GIKA), and 339 to 373 (TDKC…SIML).

It belongs to the PPR family. P subfamily.

This chain is Pentatricopeptide repeat-containing protein At1g01970, found in Arabidopsis thaliana (Mouse-ear cress).